We begin with the raw amino-acid sequence, 291 residues long: tRNA U34 carboxymethyltransferase (291 aa).

Carboxy-S-adenosyl-L-methionine-binding positions include Lys-61, Trp-75, Lys-80, Gly-100, 122–124 (DPS), 149–150 (VE), Tyr-169, and Arg-284.

This sequence belongs to the class I-like SAM-binding methyltransferase superfamily. CmoB family. In terms of assembly, homotetramer.

The enzyme catalyses carboxy-S-adenosyl-L-methionine + 5-hydroxyuridine(34) in tRNA = 5-carboxymethoxyuridine(34) in tRNA + S-adenosyl-L-homocysteine + H(+). Functionally, catalyzes carboxymethyl transfer from carboxy-S-adenosyl-L-methionine (Cx-SAM) to 5-hydroxyuridine (ho5U) to form 5-carboxymethoxyuridine (cmo5U) at position 34 in tRNAs. This chain is tRNA U34 carboxymethyltransferase, found in Campylobacter jejuni subsp. jejuni serotype O:2 (strain ATCC 700819 / NCTC 11168).